The chain runs to 449 residues: Heterogeneous nuclear ribonucleoprotein H2 (449 aa).

Methionine 1 is modified (N-acetylmethionine). Methionine 2 bears the N-acetylmethionine; in Heterogeneous nuclear ribonucleoprotein H2, N-terminally processed mark. The RRM 1 domain occupies 11 to 90; it reads FVVKVRGLPW…RYVEVFKSNS (80 aa). Residue serine 23 is modified to Phosphoserine. Lysine 35 participates in a covalent cross-link: Glycyl lysine isopeptide (Lys-Gly) (interchain with G-Cter in SUMO2). Phosphoserine occurs at positions 54 and 63. Residue lysine 87 forms a Glycyl lysine isopeptide (Lys-Gly) (interchain with G-Cter in SUMO2) linkage. Serine 90 is subject to Phosphoserine. Lysine 98 is covalently cross-linked (Glycyl lysine isopeptide (Lys-Gly) (interchain with G-Cter in SUMO2)). The RRM 2 domain occupies 111–188; the sequence is GFVRLRGLPF…RYIEIFKSSR (78 aa). Arginine 233 is modified (dimethylated arginine; alternate). Arginine 233 is modified (omega-N-methylarginine; alternate). The stretch at 234-249 is one 1-1 repeat; that stretch reads GAYGGGYGGYDDYGGY. The interval 234-433 is 2 X 16 AA Gly-rich approximate repeats; sequence GAYGGGYGGY…YGGQSSMSGY (200 aa). Position 246 is a phosphotyrosine (tyrosine 246). The 76-residue stretch at 289-364 folds into the RRM 3 domain; it reads HCVHMRGLPY…RYVELFLNST (76 aa). Serine 310 bears the Phosphoserine mark. 3 consecutive repeat copies span residues 354–372, 374–392, and 418–433. Residues 354 to 392 are 2 X 19 AA perfect repeats; it reads HRYVELFLNSTAGTSGGAYDHSYVELFLNSTAGASGGAY.

Component of a ribonucleoprotein complex containing mRNAs and RNA-binding proteins including DDX5, HNRNPH2 and SRSF1 as well as splicing regulator ARVCF. Interacts with TXNL4/DIM1.

It is found in the nucleus. It localises to the nucleoplasm. Its function is as follows. This protein is a component of the heterogeneous nuclear ribonucleoprotein (hnRNP) complexes which provide the substrate for the processing events that pre-mRNAs undergo before becoming functional, translatable mRNAs in the cytoplasm. Binds poly(RG). In Mus musculus (Mouse), this protein is Heterogeneous nuclear ribonucleoprotein H2 (Hnrnph2).